A 121-amino-acid polypeptide reads, in one-letter code: ORF8 protein (121 aa).

An N-terminal signal peptide occupies residues 1–15 (MKFLVFLGIITTVAA). The region spanning 19 to 121 (ECSLQSCTQH…HDVRVVLDFI (103 aa)) is the SARS ORF8 Ig-like domain. Cystine bridges form between C25–C90, C37–C102, and C61–C83. An N-linked (GlcNAc...) (complex) asparagine; by host glycan is attached at N78.

In terms of assembly, homodimer. Interacts with host IL17RA. Interacts with host IL17RC. Interacts with host MHC-I. In terms of processing, glycosylated by the host when secreted via the conventional pathway. The glycosylated form cannot bind IL17A and would not participate in the cytokine storm.

The protein localises to the secreted. In terms of biological role, plays a role in modulating the host immune response. May act as a secreted virokine by mimicking interleukin-17A (IL17A), and thereby binding to the IL17RA receptor, leading to activation of the IL17 pathway and increased secretion of pro-inflammatory factors. Contributes to the cytokine storm during SARS-CoV-2 infection when secreted by unconventional pathway. May act by down-regulating major histocompability complex class I (MHC-I) at cell surface. May inhibit expression of some members of the IFN-stimulated gene (ISG) family including hosts IGF2BP1/ZBP1, MX1 and MX2, and DHX58. The sequence is that of ORF8 protein from Severe acute respiratory syndrome coronavirus 2 (2019-nCoV).